A 467-amino-acid chain; its full sequence is RuvB-like helicase 2 (467 aa).

ATP is bound at residue 73-80 (GPPSTGKT).

It belongs to the RuvB family. May form heterododecamers with RVB1. Component of the SWR1 chromatin remodeling complex, the INO80 chromatin remodeling complex, and of the R2TP complex.

It is found in the nucleus. The catalysed reaction is ATP + H2O = ADP + phosphate + H(+). DNA helicase which participates in several chromatin remodeling complexes, including the SWR1 and the INO80 complexes. The SWR1 complex mediates the ATP-dependent exchange of histone H2A for the H2A variant HZT1 leading to transcriptional regulation of selected genes by chromatin remodeling. The INO80 complex remodels chromatin by shifting nucleosomes and is involved in DNA repair. Also involved in pre-rRNA processing. This Kluyveromyces lactis (strain ATCC 8585 / CBS 2359 / DSM 70799 / NBRC 1267 / NRRL Y-1140 / WM37) (Yeast) protein is RuvB-like helicase 2 (RVB2).